A 514-amino-acid chain; its full sequence is Cilia- and flagella-associated protein 53 (514 aa).

Coiled-coil stretches lie at residues 91–148 (IINI…RQDF) and 203–474 (KLWE…REFE).

Belongs to the CFAP53 family. As to quaternary structure, microtubule inner protein component of sperm flagellar doublet microtubules. Interacts with PIERCE1 and PIERCE2; the interactions link outer dynein arms docking complex (ODA-DC) to the internal microtubule inner proteins (MIP) in cilium axoneme. Interacts with CCDC38. Interacts with CCDC42 and IFT88. Interacts with centriolar satellite proteins PIBF1/CEP90 and PCM1. Interacts with dyneins DNAIC1, DNAIC2 AND DNAH11 and with ODA-DC component ODAD4/TTC25. Expressed in skin fibroblasts (at protein level). Expressed in nasal respiratory epithelial cells (at protein level). Expressed in airway epithelial cells.

The protein resides in the cytoplasm. It localises to the cytoskeleton. It is found in the cilium axoneme. The protein localises to the flagellum axoneme. Its subcellular location is the microtubule organizing center. The protein resides in the centrosome. It localises to the centriole. It is found in the centriolar satellite. The protein localises to the spindle pole. Its subcellular location is the cell projection. The protein resides in the cilium. In terms of biological role, microtubule inner protein (MIP) part of the dynein-decorated doublet microtubules (DMTs) in cilia axoneme, which is required for motile cilia beating. Regulates motility patterns of both 9+0 and 9+2 motile cilia through differential localization and recruitment of axonemal dynein components. Required for centriolar satellite integrity and non-motile cilium assembly. Required for motile cilium formation. Through its role in the beating of primary cilia, involved in the establishment of organ laterality during embryogenesis. Required for sperm flagellum biogenesis and is essential for male fertility. The protein is Cilia- and flagella-associated protein 53 of Homo sapiens (Human).